The chain runs to 551 residues: Probable malate:quinone oxidoreductase (551 aa).

Positions 525–544 (QTAAAAPQAQPQLKPQPDAK) are enriched in low complexity. A disordered region spans residues 525 to 551 (QTAAAAPQAQPQLKPQPDAKPVADIAL).

Belongs to the MQO family. FAD is required as a cofactor.

The catalysed reaction is (S)-malate + a quinone = a quinol + oxaloacetate. The protein operates within carbohydrate metabolism; tricarboxylic acid cycle; oxaloacetate from (S)-malate (quinone route): step 1/1. The sequence is that of Probable malate:quinone oxidoreductase from Enterobacter sp. (strain 638).